The following is a 555-amino-acid chain: Formate--tetrahydrofolate ligase (555 aa).

64 to 71 is a binding site for ATP; the sequence is TKAGIGKT.

Belongs to the formate--tetrahydrofolate ligase family.

The enzyme catalyses (6S)-5,6,7,8-tetrahydrofolate + formate + ATP = (6R)-10-formyltetrahydrofolate + ADP + phosphate. It participates in one-carbon metabolism; tetrahydrofolate interconversion. This Bacteroides thetaiotaomicron (strain ATCC 29148 / DSM 2079 / JCM 5827 / CCUG 10774 / NCTC 10582 / VPI-5482 / E50) protein is Formate--tetrahydrofolate ligase.